The chain runs to 328 residues: Hairy/enhancer-of-split related with YRPW motif-like protein (328 aa).

Positions 1 to 57 (MKRPKEPSGSDGESDGPIDVGQEGQLSQMARPLSTPSSSQMQARKKHRGIIEKRRRD) are disordered. The span at 24 to 42 (GQLSQMARPLSTPSSSQMQ) shows a compositional bias: polar residues. A transcriptional repression and interaction with NCOR1 and SIN3A region spans residues 42–111 (QARKKHRGII…GGTGFFDARA (70 aa)). Positions 43–98 (ARKKHRGIIEKRRRDRINSSLSELRRLVPTAFEKQGSSKLEKAEVLQMTVDHLKML) constitute a bHLH domain. Residues 116–153 (FRSIGFRECLTEVIRYLGVLEGPSSRADPVRIRLLSHL) form the Orange domain. A disordered region spans residues 239 to 308 (SRGASSTRRA…NSSSPGPAGR (70 aa)). Residues 261–270 (APSSRAARSS) show a composition bias toward low complexity.

It belongs to the HEY family. Self-associates. Interacts with GATA4, GATA6, HES1, HEY1 and HEY2. Interacts with HDAC1, NCOR1 and SIN3A.

Its subcellular location is the nucleus. In terms of biological role, downstream effector of Notch signaling which may be required for cardiovascular development. Transcriptional repressor which binds preferentially to the canonical E box sequence 5'-CACGTG-3'. Represses transcription by the cardiac transcriptional activators GATA4 and GATA6. This Homo sapiens (Human) protein is Hairy/enhancer-of-split related with YRPW motif-like protein (HEYL).